The following is an 834-amino-acid chain: Translation initiation factor IF-2 (834 aa).

The interval 1 to 247 is disordered; that stretch reads MTEEKKFSGS…STPATVRKEQ (247 aa). Over residues 45-101 the composition is skewed to low complexity; that stretch reads GGSRPSRPARPNNNNQNRPNNGGQSQNRNNQNRSNTSTGGQNRSNNGGNRNNRPGSR. Residues 109–125 are compositionally biased toward basic and acidic residues; it reads PMIREKKNWSTKPREGQ. Composition is skewed to low complexity over residues 149 to 165 and 173 to 201; these read ASAA…ATKP and ATKP…SARN. Residues 224-233 are compositionally biased toward basic residues; the sequence is GSKKSRRIAA. The 170-residue stretch at 335 to 504 folds into the tr-type G domain; that stretch reads SRPPVVTIMG…LLQAEVLELK (170 aa). Residues 344 to 351 form a G1 region; it reads GHVDHGKT. 344–351 lines the GTP pocket; that stretch reads GHVDHGKT. The segment at 369 to 373 is G2; it reads GITQH. The interval 390-393 is G3; it reads DTPG. GTP is bound by residues 390–394 and 444–447; these read DTPGH and NKID. A G4 region spans residues 444-447; the sequence is NKID. Positions 480–482 are G5; sequence SAK.

The protein belongs to the TRAFAC class translation factor GTPase superfamily. Classic translation factor GTPase family. IF-2 subfamily.

It is found in the cytoplasm. One of the essential components for the initiation of protein synthesis. Protects formylmethionyl-tRNA from spontaneous hydrolysis and promotes its binding to the 30S ribosomal subunits. Also involved in the hydrolysis of GTP during the formation of the 70S ribosomal complex. The protein is Translation initiation factor IF-2 of Leuconostoc mesenteroides subsp. mesenteroides (strain ATCC 8293 / DSM 20343 / BCRC 11652 / CCM 1803 / JCM 6124 / NCDO 523 / NBRC 100496 / NCIMB 8023 / NCTC 12954 / NRRL B-1118 / 37Y).